A 453-amino-acid polypeptide reads, in one-letter code: MKFTTLATIASTLLFAANANADTCNPLKSSDCSPVPALGSSFLEKFDNGLGPHFESLKKQGTIDSGSNGLSLTMKKRFDNPSFKSNFYIMFGRVEVVLKGAEGKGIVSSFYLQSDDLDEIDIEMFGGDPYQWQSNYFIKGNTATYDRGGYHDIANPLKDYHTYVIDWTKDAVTWSVDGSVIRTIPKDNAQGFPQSPMAIYAGIWAGGDPSNQPGTIDWAGGITDYSQAPFTMGIKSVLVADYSSGKQYSYSDQSGSWESIKADGGKVNGRYDQAQDDIKKLESGQSVDSNDSSSSPSASSSDSSSTSSASSSSSSSSPSSTTSSSSSSSSSSSSSSSSSSEKSNAVPSASVIVFIGTKGGDKTTVTSSSGVSVPTSASVSTAAGTTSGSANSAPASAASSTASTVFISTGDAAPSSSASEKPSVSTTENNGAVSVAKTTSLFGFVALIGFLFV.

Residues 1-21 (MKFTTLATIASTLLFAANANA) form the signal peptide. C24 and C32 are oxidised to a cystine. A GH16 domain is found at 28-227 (KSSDCSPVPA…WAGGITDYSQ (200 aa)). E119 functions as the Nucleophile in the catalytic mechanism. E123 functions as the Proton donor in the catalytic mechanism. Chitin-binding residues include E123, W204, and T215. Disordered stretches follow at residues 281–343 (LESG…SEKS), 362–397 (KTTV…PASA), and 410–430 (GDAA…TENN). Composition is skewed to low complexity over residues 286–343 (SVDS…SEKS), 363–397 (TTVT…PASA), and 412–425 (AAPS…PSVS). N290 carries N-linked (GlcNAc...) asparagine glycosylation. The GPI-anchor amidated asparagine moiety is linked to residue N430. Positions 431 to 453 (GAVSVAKTTSLFGFVALIGFLFV) are cleaved as a propeptide — removed in mature form.

Belongs to the glycosyl hydrolase 16 family. CRH1 subfamily. The GPI-anchor is attached to the protein in the endoplasmic reticulum and serves to target the protein to the cell surface. There, the glucosamine-inositol phospholipid moiety is cleaved off and the GPI-modified mannoprotein is covalently attached via its lipidless GPI glycan remnant to the 1,6-beta-glucan of the outer cell wall layer.

Its subcellular location is the secreted. It is found in the cell wall. The protein resides in the membrane. The catalysed reaction is Random endo-hydrolysis of N-acetyl-beta-D-glucosaminide (1-&gt;4)-beta-linkages in chitin and chitodextrins.. Functionally, dual chitinase/transglycosylase that plays a role in cell wall architecture. Chitinase and transglycosylase activities are coupled. Required for the polysaccharide cross-linking at the septa and the cell wall. More specifically, transfers chitin to 1,6-beta-glucan in the cell wall. Plays an important role in fungal pathogenesis via its functions in cell wall assembly and regeneration, filamentation, and adherence to host cells. This Candida albicans (strain SC5314 / ATCC MYA-2876) (Yeast) protein is Crh-like protein CRH11 (CRH11).